Reading from the N-terminus, the 339-residue chain is MRVYYDRDADVNLIKSKKVVIVGYGSQGRAHALNLKDSGAANVRVALREGSATAKKAQADGFEVMNVADAAKWADLMMMATPDELQADIYKEHIHDNLRDGAAIAFAHGLNVHFGLIEPKKSVDVVMIAPKGPGHTVRGEYQKGGGVPCLIAIHQDASGNAHDLALSYASGVGGGRSGVIETTFKEECETDLFGEQAVLCGGVVELIRTGFEVLVEAGYAPEMAYFECLHEMKLIVDLIYEGGIANMNYSISNTAEWGEYVTGPRIITAETKEEMKRVLKDIQTGKFTSDWMQEYRAGAARFKGIRRNNDSHQIEEVGEKLRGMMPWIAANKLVDKARN.

A KARI N-terminal Rossmann domain is found at 1 to 182 (MRVYYDRDAD…GGGRSGVIET (182 aa)). Residues 24 to 27 (YGSQ), Arg48, Ser51, Thr53, and 83 to 86 (DELQ) contribute to the NADP(+) site. His108 is a catalytic residue. Gly134 is a binding site for NADP(+). The region spanning 183–328 (TFKEECETDL…EKLRGMMPWI (146 aa)) is the KARI C-terminal knotted domain. Mg(2+)-binding residues include Asp191, Glu195, Glu227, and Glu231. Ser252 lines the substrate pocket.

This sequence belongs to the ketol-acid reductoisomerase family. Requires Mg(2+) as cofactor.

It catalyses the reaction (2R)-2,3-dihydroxy-3-methylbutanoate + NADP(+) = (2S)-2-acetolactate + NADPH + H(+). It carries out the reaction (2R,3R)-2,3-dihydroxy-3-methylpentanoate + NADP(+) = (S)-2-ethyl-2-hydroxy-3-oxobutanoate + NADPH + H(+). It participates in amino-acid biosynthesis; L-isoleucine biosynthesis; L-isoleucine from 2-oxobutanoate: step 2/4. The protein operates within amino-acid biosynthesis; L-valine biosynthesis; L-valine from pyruvate: step 2/4. Functionally, involved in the biosynthesis of branched-chain amino acids (BCAA). Catalyzes an alkyl-migration followed by a ketol-acid reduction of (S)-2-acetolactate (S2AL) to yield (R)-2,3-dihydroxy-isovalerate. In the isomerase reaction, S2AL is rearranged via a Mg-dependent methyl migration to produce 3-hydroxy-3-methyl-2-ketobutyrate (HMKB). In the reductase reaction, this 2-ketoacid undergoes a metal-dependent reduction by NADPH to yield (R)-2,3-dihydroxy-isovalerate. The polypeptide is Ketol-acid reductoisomerase (NADP(+)) (Brucella anthropi (strain ATCC 49188 / DSM 6882 / CCUG 24695 / JCM 21032 / LMG 3331 / NBRC 15819 / NCTC 12168 / Alc 37) (Ochrobactrum anthropi)).